The chain runs to 373 residues: Probable pectin lyase C (373 aa).

The N-terminal stretch at 1–17 (MKKYLLSLLAAVTYTTA) is a signal peptide. 2 disulfides stabilise this stretch: C78-C95 and C87-C215. N140 and N229 each carry an N-linked (GlcNAc...) asparagine glycan. R245 is a catalytic residue. C315 and C323 form a disulfide bridge.

The protein belongs to the polysaccharide lyase 1 family.

Its subcellular location is the secreted. It carries out the reaction Eliminative cleavage of (1-&gt;4)-alpha-D-galacturonan methyl ester to give oligosaccharides with 4-deoxy-6-O-methyl-alpha-D-galact-4-enuronosyl groups at their non-reducing ends.. Pectinolytic enzymes consist of four classes of enzymes: pectin lyase, polygalacturonase, pectin methylesterase and rhamnogalacturonase. Among pectinolytic enzymes, pectin lyase is the most important in depolymerization of pectin, since it cleaves internal glycosidic bonds of highly methylated pectins. The sequence is that of Probable pectin lyase C (pelC) from Emericella nidulans (strain FGSC A4 / ATCC 38163 / CBS 112.46 / NRRL 194 / M139) (Aspergillus nidulans).